Reading from the N-terminus, the 417-residue chain is UDP-N-acetylglucosamine 1-carboxyvinyltransferase (417 aa).

22–23 is a phosphoenolpyruvate binding site; that stretch reads KN. UDP-N-acetyl-alpha-D-glucosamine is bound at residue Arg-92. The active-site Proton donor is Cys-116. The residue at position 116 (Cys-116) is a 2-(S-cysteinyl)pyruvic acid O-phosphothioketal. The UDP-N-acetyl-alpha-D-glucosamine site is built by Asp-304 and Ile-326.

This sequence belongs to the EPSP synthase family. MurA subfamily.

It localises to the cytoplasm. The enzyme catalyses phosphoenolpyruvate + UDP-N-acetyl-alpha-D-glucosamine = UDP-N-acetyl-3-O-(1-carboxyvinyl)-alpha-D-glucosamine + phosphate. It functions in the pathway cell wall biogenesis; peptidoglycan biosynthesis. Cell wall formation. Adds enolpyruvyl to UDP-N-acetylglucosamine. In Geotalea daltonii (strain DSM 22248 / JCM 15807 / FRC-32) (Geobacter daltonii), this protein is UDP-N-acetylglucosamine 1-carboxyvinyltransferase.